Here is an 860-residue protein sequence, read N- to C-terminus: Protein argonaute-3 (860 aa).

Residues Pro-230 to Ala-349 enclose the PAZ domain. One can recognise a Piwi domain in the interval Leu-518–Val-819. Residues Tyr-530 to Lys-567 form an interaction with guide RNA region. Residues Asp-598, Glu-638, and Asp-670 each coordinate a divalent metal cation. The interval Gln-758–Tyr-805 is interaction with guide RNA. His-808 serves as a coordination point for a divalent metal cation.

It belongs to the argonaute family. Ago subfamily.

It is found in the cytoplasm. Its subcellular location is the P-body. It catalyses the reaction Endonucleolytic cleavage to 5'-phosphomonoester.. Its function is as follows. Required for RNA-mediated gene silencing (RNAi). Binds to short RNAs such as microRNAs (miRNAs) and represses the translation of mRNAs which are complementary to them. Possesses RNA slicer activity but only on select RNAs bearing 5'- and 3'-flanking sequences to the region of guide-target complementarity. In Gallus gallus (Chicken), this protein is Protein argonaute-3 (AGO3).